Here is a 510-residue protein sequence, read N- to C-terminus: Cytochrome P450 52C2 (510 aa).

Cys458 is a binding site for heme.

This sequence belongs to the cytochrome P450 family. The cofactor is heme.

Its subcellular location is the membrane. Functionally, together with an NADPH cytochrome P450 the enzyme system catalyzes the terminal hydroxylation as the first step in the assimilation of alkanes and fatty acids. The chain is Cytochrome P450 52C2 (CYP52C2) from Candida maltosa (Yeast).